Here is a 304-residue protein sequence, read N- to C-terminus: MHIRILGSAAGGGFPQWNCNCRNCRGVRDGSVAAQPRTQSSIALSDDGERWILCNASPDIRVQIAAFPALQPARRPRDTAIGAIVLLDSQIDHTTGLLSLREGCPHEVWCTQMVHQDLSEGFPLFRMLSHWNGGLRHRPIALDGEPFAIPACPRLRFTAIPLRSSAPPYSPHRGDPHPGDNIGLFVEDLDSAGTLFYAPGLGEVDEALLEWMRRADCLLVDGTLWRDDEMLACEVGDKLGRQMGHLAQSGPGGMLEVLAKVPAARKVLIHINNTNPILDTASAERAELDASGIEVAWDGMHIQL.

The protein belongs to the PqqB family.

The protein operates within cofactor biosynthesis; pyrroloquinoline quinone biosynthesis. May be involved in the transport of PQQ or its precursor to the periplasm. In Pseudomonas paraeruginosa (strain DSM 24068 / PA7) (Pseudomonas aeruginosa (strain PA7)), this protein is Coenzyme PQQ synthesis protein B.